Consider the following 100-residue polypeptide: UPF0213 protein CKO_04549 (100 aa).

One can recognise a GIY-YIG domain in the interval 2–77 (TPWYLYLIRT…KRLTKRQKER (76 aa)).

This sequence belongs to the UPF0213 family.

This is UPF0213 protein CKO_04549 from Citrobacter koseri (strain ATCC BAA-895 / CDC 4225-83 / SGSC4696).